Reading from the N-terminus, the 220-residue chain is Large ribosomal subunit protein uL4 (220 aa).

A disordered region spans residues 45-102 (AARQGTHKTKTRGEVRGGGRKPFRQKGTGRARQGSIRAPHYTGGGTVHGPVPRDYSQR). Positions 62 to 73 (GGRKPFRQKGTG) are enriched in basic residues.

It belongs to the universal ribosomal protein uL4 family. As to quaternary structure, part of the 50S ribosomal subunit.

Functionally, one of the primary rRNA binding proteins, this protein initially binds near the 5'-end of the 23S rRNA. It is important during the early stages of 50S assembly. It makes multiple contacts with different domains of the 23S rRNA in the assembled 50S subunit and ribosome. In terms of biological role, forms part of the polypeptide exit tunnel. This Corynebacterium aurimucosum (strain ATCC 700975 / DSM 44827 / CIP 107346 / CN-1) (Corynebacterium nigricans) protein is Large ribosomal subunit protein uL4.